The sequence spans 783 residues: uncharacterized protein (783 aa).

Positions 40–66 (CFNCKARKVRCDGANPCKACASNNLEC) form a DNA-binding region, zn(2)-C6 fungal-type.

The protein resides in the cytoplasm. It localises to the nucleus. This is an uncharacterized protein from Schizosaccharomyces pombe (strain 972 / ATCC 24843) (Fission yeast).